Reading from the N-terminus, the 316-residue chain is Ribosomal RNA small subunit methyltransferase H (316 aa).

Residues 42-44, Asp62, Phe86, Asp104, and Gln111 each bind S-adenosyl-L-methionine; that span reads GGH.

This sequence belongs to the methyltransferase superfamily. RsmH family.

The protein resides in the cytoplasm. The enzyme catalyses cytidine(1402) in 16S rRNA + S-adenosyl-L-methionine = N(4)-methylcytidine(1402) in 16S rRNA + S-adenosyl-L-homocysteine + H(+). In terms of biological role, specifically methylates the N4 position of cytidine in position 1402 (C1402) of 16S rRNA. The protein is Ribosomal RNA small subunit methyltransferase H of Polynucleobacter asymbioticus (strain DSM 18221 / CIP 109841 / QLW-P1DMWA-1) (Polynucleobacter necessarius subsp. asymbioticus).